The sequence spans 95 residues: Large ribosomal subunit protein uL23 (95 aa).

The protein belongs to the universal ribosomal protein uL23 family. Part of the 50S ribosomal subunit. Contacts protein L29, and trigger factor when it is bound to the ribosome.

One of the early assembly proteins it binds 23S rRNA. One of the proteins that surrounds the polypeptide exit tunnel on the outside of the ribosome. Forms the main docking site for trigger factor binding to the ribosome. The sequence is that of Large ribosomal subunit protein uL23 from Syntrophotalea carbinolica (strain DSM 2380 / NBRC 103641 / GraBd1) (Pelobacter carbinolicus).